Consider the following 157-residue polypeptide: Endoribonuclease YbeY (157 aa).

Zn(2+)-binding residues include His-111, His-115, and His-121.

The protein belongs to the endoribonuclease YbeY family. Zn(2+) is required as a cofactor.

It is found in the cytoplasm. Single strand-specific metallo-endoribonuclease involved in late-stage 70S ribosome quality control and in maturation of the 3' terminus of the 16S rRNA. In Pseudomonas putida (strain ATCC 47054 / DSM 6125 / CFBP 8728 / NCIMB 11950 / KT2440), this protein is Endoribonuclease YbeY.